We begin with the raw amino-acid sequence, 70 residues long: Small ribosomal subunit protein bS21 (70 aa).

This sequence belongs to the bacterial ribosomal protein bS21 family.

The chain is Small ribosomal subunit protein bS21 from Campylobacter fetus subsp. fetus (strain 82-40).